Here is a 620-residue protein sequence, read N- to C-terminus: Transcription factor GTE11 (620 aa).

Positions 1-35 (MTVRNGGFPGDYNRNSFDSPGGCDDSPNASKDDET) are disordered. The region spanning 124 to 230 (TSTMLRMKQC…KFFEVRWKTI (107 aa)) is the Bromo domain. In terms of domain architecture, NET spans 270–351 (NSLLEPAKRV…EFLRENQKKD (82 aa)). Position 417 is a phosphoserine (serine 417). The tract at residues 445-620 (EKRYRAALLK…GNEVEEGEID (176 aa)) is transcription activation domain. Residues 470–544 (NQNEKRDPET…MEKSVEINEN (75 aa)) adopt a coiled-coil conformation. Disordered regions lie at residues 491–511 (KKKE…ARRK) and 597–620 (EDED…GEID).

In terms of assembly, interacts with BT1, BT2 and BT4.

The protein localises to the nucleus. In Arabidopsis thaliana (Mouse-ear cress), this protein is Transcription factor GTE11 (GTE11).